A 126-amino-acid polypeptide reads, in one-letter code: Glycine cleavage system H protein (126 aa).

Positions Ala-23–Arg-105 constitute a Lipoyl-binding domain. An N6-lipoyllysine modification is found at Lys-64.

It belongs to the GcvH family. The glycine cleavage system is composed of four proteins: P, T, L and H. It depends on (R)-lipoate as a cofactor.

The glycine cleavage system catalyzes the degradation of glycine. The H protein shuttles the methylamine group of glycine from the P protein to the T protein. In Rubrobacter xylanophilus (strain DSM 9941 / JCM 11954 / NBRC 16129 / PRD-1), this protein is Glycine cleavage system H protein.